Here is a 104-residue protein sequence, read N- to C-terminus: Thioredoxin-3 (104 aa).

The Thioredoxin domain occupies 2 to 104; sequence SKVIHVTSNE…TLRSTLEANI (103 aa). Active-site nucleophile residues include cysteine 31 and cysteine 34. A disulfide bond links cysteine 31 and cysteine 34.

The protein belongs to the thioredoxin family.

Its function is as follows. Participates in various redox reactions through the reversible oxidation of its active center dithiol to a disulfide and catalyzes dithiol-disulfide exchange reactions. The polypeptide is Thioredoxin-3 (trxC) (Dictyostelium discoideum (Social amoeba)).